A 78-amino-acid chain; its full sequence is Beta-defensin 105A (78 aa).

Positions 1–27 are cleaved as a signal peptide; it reads MALIRKTFYFLFAVFFVLVQLPSECQA. Intrachain disulfides connect Cys-43–Cys-74, Cys-53–Cys-67, and Cys-57–Cys-73.

This sequence belongs to the beta-defensin family.

The protein localises to the secreted. Functionally, has antimicrobial activity. This is Beta-defensin 105A (DEFB105A) from Pongo pygmaeus (Bornean orangutan).